The chain runs to 363 residues: Fructose-bisphosphate aldolase C (363 aa).

Substrate is bound by residues R56 and K147. K230 functions as the Schiff-base intermediate with dihydroxyacetone-P in the catalytic mechanism.

It belongs to the class I fructose-bisphosphate aldolase family. In terms of assembly, homotetramer. In terms of tissue distribution, expressed in brain but not in liver or muscle.

It carries out the reaction beta-D-fructose 1,6-bisphosphate = D-glyceraldehyde 3-phosphate + dihydroxyacetone phosphate. It participates in carbohydrate degradation; glycolysis; D-glyceraldehyde 3-phosphate and glycerone phosphate from D-glucose: step 4/4. In Carassius auratus (Goldfish), this protein is Fructose-bisphosphate aldolase C (aldoc).